A 461-amino-acid chain; its full sequence is Transcription factor GTE3, chloroplastic (461 aa).

The span at 1 to 11 (MASGPIAGGGV) shows a compositional bias: gly residues. The segment at 1–41 (MASGPIAGGGVSKTKHKWSDSGNKSQKRSKPTVANSNSLGL) is disordered. Residues 1 to 51 (MASGPIAGGGVSKTKHKWSDSGNKSQKRSKPTVANSNSLGLEDNHQMMKIS) constitute a chloroplast transit peptide. Residues 114 to 220 (KGTVQILKSC…NLFEEKWVPL (107 aa)) enclose the Bromo domain. Positions 298-379 (LVEEASANRD…EYKESLSKKK (82 aa)) constitute an NET domain. Positions 376–392 (SKKKEEQGLDSERDAES) are enriched in basic and acidic residues. A disordered region spans residues 376–461 (SKKKEEQGLD…SSGHESDTGN (86 aa)). Over residues 393–412 (FHNSVHESNTLVTGLESSKV) the composition is skewed to polar residues. Residues 429 to 451 (GGSSSSNSSSSGSGSGSSGSDSD) show a composition bias toward low complexity. Residues 452–461 (SSGHESDTGN) are compositionally biased toward basic and acidic residues.

Interacts with SIZ1 (via PHD domain). Post-translationally, sumoylated by SIZ1. Sumoylation reduces capacity to bind to acetylated histone H3.

The protein localises to the plastid. The protein resides in the chloroplast. Its function is as follows. Probable transcription factor that binds to acetylated histone H3. The protein is Transcription factor GTE3, chloroplastic (GTE3) of Arabidopsis thaliana (Mouse-ear cress).